Here is a 31-residue protein sequence, read N- to C-terminus: Photosystem II reaction center protein T (31 aa).

A helical membrane pass occupies residues 3–23 (SFAYVLILTFAIATLFFAIAF).

It belongs to the PsbT family. PSII is composed of 1 copy each of membrane proteins PsbA, PsbB, PsbC, PsbD, PsbE, PsbF, PsbH, PsbI, PsbJ, PsbK, PsbL, PsbM, PsbT, PsbX, PsbY, PsbZ, Psb30/Ycf12, peripheral proteins PsbO, CyanoQ (PsbQ), PsbU, PsbV and a large number of cofactors. It forms dimeric complexes.

It is found in the cellular thylakoid membrane. Functionally, found at the monomer-monomer interface of the photosystem II (PS II) dimer, plays a role in assembly and dimerization of PSII. PSII is a light-driven water plastoquinone oxidoreductase, using light energy to abstract electrons from H(2)O, generating a proton gradient subsequently used for ATP formation. The chain is Photosystem II reaction center protein T from Synechococcus sp. (strain CC9902).